Consider the following 444-residue polypeptide: Tol-Pal system protein TolB (444 aa).

The first 31 residues, 1-31, serve as a signal peptide directing secretion; sequence MSFDLNRRQLMISAATAAGALALGPARDAFG.

Belongs to the TolB family. The Tol-Pal system is composed of five core proteins: the inner membrane proteins TolA, TolQ and TolR, the periplasmic protein TolB and the outer membrane protein Pal. They form a network linking the inner and outer membranes and the peptidoglycan layer.

The protein resides in the periplasm. Its function is as follows. Part of the Tol-Pal system, which plays a role in outer membrane invagination during cell division and is important for maintaining outer membrane integrity. This is Tol-Pal system protein TolB from Rhodopseudomonas palustris (strain ATCC BAA-98 / CGA009).